Consider the following 739-residue polypeptide: Probable beta-glucosidase L (739 aa).

The N-terminal stretch at 1–17 (MQTLFLSLLAAAVTVHA) is a signal peptide. Asn-40 and Asn-224 each carry an N-linked (GlcNAc...) asparagine glycan. The active site involves Asp-252. N-linked (GlcNAc...) asparagine glycosylation is present at Asn-398.

Belongs to the glycosyl hydrolase 3 family.

The protein resides in the secreted. The catalysed reaction is Hydrolysis of terminal, non-reducing beta-D-glucosyl residues with release of beta-D-glucose.. It functions in the pathway glycan metabolism; cellulose degradation. Beta-glucosidases are one of a number of cellulolytic enzymes involved in the degradation of cellulosic biomass. Catalyzes the last step releasing glucose from the inhibitory cellobiose. The sequence is that of Probable beta-glucosidase L (bglL) from Aspergillus fumigatus (strain CBS 144.89 / FGSC A1163 / CEA10) (Neosartorya fumigata).